The chain runs to 356 residues: Alanine racemase (356 aa).

Catalysis depends on lysine 35, which acts as the Proton acceptor; specific for D-alanine. Lysine 35 carries the post-translational modification N6-(pyridoxal phosphate)lysine. Residue arginine 130 participates in substrate binding. Residue tyrosine 253 is the Proton acceptor; specific for L-alanine of the active site. Methionine 301 is a substrate binding site.

The protein belongs to the alanine racemase family. Pyridoxal 5'-phosphate is required as a cofactor.

The catalysed reaction is L-alanine = D-alanine. The protein operates within amino-acid biosynthesis; D-alanine biosynthesis; D-alanine from L-alanine: step 1/1. Its function is as follows. Catalyzes the interconversion of L-alanine and D-alanine. May also act on other amino acids. The sequence is that of Alanine racemase (alr) from Erwinia tasmaniensis (strain DSM 17950 / CFBP 7177 / CIP 109463 / NCPPB 4357 / Et1/99).